We begin with the raw amino-acid sequence, 596 residues long: Elongation factor 4 (596 aa).

The tr-type G domain maps to 2–184 (RNIRNFSIIA…AIVHRIPPPT (183 aa)). Residues 14 to 19 (DHGKST) and 131 to 134 (NKID) contribute to the GTP site.

The protein belongs to the TRAFAC class translation factor GTPase superfamily. Classic translation factor GTPase family. LepA subfamily.

The protein localises to the cell inner membrane. It carries out the reaction GTP + H2O = GDP + phosphate + H(+). Functionally, required for accurate and efficient protein synthesis under certain stress conditions. May act as a fidelity factor of the translation reaction, by catalyzing a one-codon backward translocation of tRNAs on improperly translocated ribosomes. Back-translocation proceeds from a post-translocation (POST) complex to a pre-translocation (PRE) complex, thus giving elongation factor G a second chance to translocate the tRNAs correctly. Binds to ribosomes in a GTP-dependent manner. This chain is Elongation factor 4, found in Xanthomonas oryzae pv. oryzae (strain PXO99A).